The sequence spans 301 residues: Ornithine carbamoyltransferase (301 aa).

Carbamoyl phosphate contacts are provided by residues R100 and 127–130; that span reads HPCQ. L-ornithine is bound by residues N158, D221, and 225 to 226; that span reads SM. Positions 260 and 288 each coordinate carbamoyl phosphate.

Belongs to the aspartate/ornithine carbamoyltransferase superfamily. OTCase family.

The protein resides in the cytoplasm. It carries out the reaction carbamoyl phosphate + L-ornithine = L-citrulline + phosphate + H(+). It participates in amino-acid biosynthesis; L-arginine biosynthesis; L-arginine from L-ornithine and carbamoyl phosphate: step 1/3. Functionally, reversibly catalyzes the transfer of the carbamoyl group from carbamoyl phosphate (CP) to the N(epsilon) atom of ornithine (ORN) to produce L-citrulline. The chain is Ornithine carbamoyltransferase (argF) from Vibrio sp. (strain 2693).